The following is a 234-amino-acid chain: MHHHWHRSFILHRRSYSETSLILDLLTENEGRISLIAKGALRPRSALKGYLQPFTPLLLRWSGKSAIKTLCGAEPISIAVPLTGIFLYSGLYVNELLSRLLLPNIDYRALFFDYLDCLEALASAQDTSERALRRFELALLTHLGYGVDFLHCVETGEPVVAQMTYRYQHEIGFIRSPEDDSLGFTGHQLQSLAKGAFYDQETLKAAKRFTRIALKPHLGHRPLNSRSLFRKFNL.

Belongs to the RecO family.

Its function is as follows. Involved in DNA repair and RecF pathway recombination. The chain is DNA repair protein RecO from Hamiltonella defensa subsp. Acyrthosiphon pisum (strain 5AT).